A 395-amino-acid chain; its full sequence is Enolase (395 aa).

Residues H136 and E145 each contribute to the substrate site. Catalysis depends on E188, which acts as the Proton donor. 3 residues coordinate Mg(2+): D223, E271, and D296. Residues E271 and D296 each coordinate substrate. K321 functions as the Proton acceptor in the catalytic mechanism. Substrate contacts are provided by residues 348–351 (SHRS) and K372.

Belongs to the enolase family. Homodimer. Mg(2+) is required as a cofactor.

It localises to the cytoplasm. It catalyses the reaction (2R)-2-phosphoglycerate = phosphoenolpyruvate + H2O. It participates in carbohydrate degradation; glycolysis; pyruvate from D-glyceraldehyde 3-phosphate: step 4/5. The polypeptide is Enolase (Alligator mississippiensis (American alligator)).